The chain runs to 463 residues: Elongation factor 1-alpha 1 (463 aa).

Residues 5–242 enclose the tr-type G domain; sequence KIHINIVVIG…DAILPPARPT (238 aa). A G1 region spans residues 14–21; that stretch reads GHVDSGKS. Position 14–21 (14–21) interacts with GTP; that stretch reads GHVDSGKS. The G2 stretch occupies residues 70 to 74; sequence GITID. The segment at 91 to 94 is G3; it reads DAPG. GTP is bound by residues 91 to 95 and 153 to 156; these read DAPGH and NKMD. A G4 region spans residues 153–156; the sequence is NKMD. Residues 194–196 are G5; the sequence is SGW. A 5-glutamyl glycerylphosphorylethanolamine mark is found at E301 and E374.

This sequence belongs to the TRAFAC class translation factor GTPase superfamily. Classic translation factor GTPase family. EF-Tu/EF-1A subfamily.

The protein localises to the cytoplasm. In terms of biological role, this protein promotes the GTP-dependent binding of aminoacyl-tRNA to the A-site of ribosomes during protein biosynthesis. The polypeptide is Elongation factor 1-alpha 1 (Drosophila melanogaster (Fruit fly)).